Consider the following 653-residue polypeptide: Fructose-1,6-bisphosphatase class 3 (653 aa).

This sequence belongs to the FBPase class 3 family. The cofactor is Mn(2+).

The catalysed reaction is beta-D-fructose 1,6-bisphosphate + H2O = beta-D-fructose 6-phosphate + phosphate. It functions in the pathway carbohydrate biosynthesis; gluconeogenesis. The protein is Fructose-1,6-bisphosphatase class 3 of Listeria innocua serovar 6a (strain ATCC BAA-680 / CLIP 11262).